Reading from the N-terminus, the 163-residue chain is CASP-like protein 1C2 (163 aa).

The Cytoplasmic portion of the chain corresponds to 1–7 (MAKLHRL). The chain crosses the membrane as a helical span at residues 8 to 28 (ISAVLRLAAAGAAAAAAVIMV). Residues 29–50 (TSHETTSLFGIEMEAKYSYTPS) are Extracellular-facing. The chain crosses the membrane as a helical span at residues 51–71 (FVFFVVAFAVTFAYSLLAAVL). Residues 72 to 80 (VRPGTTASR) are Cytoplasmic-facing. Residues 81–101 (LVLLSDVTVGMLLTGAVAATG) traverse the membrane as a helical segment. The Extracellular portion of the chain corresponds to 102 to 129 (AISQVGKSGNEHAGWLPICAQVQAYCGH). Residues 130-150 (VMGALIAGFVSLLLYFLIIMY) traverse the membrane as a helical segment. The Cytoplasmic portion of the chain corresponds to 151-163 (SLHAVAEPLCSCH).

Belongs to the Casparian strip membrane proteins (CASP) family. As to quaternary structure, homodimer and heterodimers.

Its subcellular location is the cell membrane. This Zea mays (Maize) protein is CASP-like protein 1C2.